A 147-amino-acid polypeptide reads, in one-letter code: 3-dehydroquinate dehydratase (147 aa).

Residue tyrosine 23 is the Proton acceptor of the active site. The substrate site is built by asparagine 74, histidine 80, and aspartate 87. The active-site Proton donor is histidine 100. Substrate-binding positions include 101–102 (IS) and arginine 111.

The protein belongs to the type-II 3-dehydroquinase family. As to quaternary structure, homododecamer.

The enzyme catalyses 3-dehydroquinate = 3-dehydroshikimate + H2O. The protein operates within metabolic intermediate biosynthesis; chorismate biosynthesis; chorismate from D-erythrose 4-phosphate and phosphoenolpyruvate: step 3/7. Functionally, catalyzes a trans-dehydration via an enolate intermediate. The polypeptide is 3-dehydroquinate dehydratase (Bacillus pumilus (strain SAFR-032)).